Consider the following 102-residue polypeptide: Aspartyl/glutamyl-tRNA(Asn/Gln) amidotransferase subunit C (102 aa).

It belongs to the GatC family. Heterotrimer of A, B and C subunits.

The enzyme catalyses L-glutamyl-tRNA(Gln) + L-glutamine + ATP + H2O = L-glutaminyl-tRNA(Gln) + L-glutamate + ADP + phosphate + H(+). The catalysed reaction is L-aspartyl-tRNA(Asn) + L-glutamine + ATP + H2O = L-asparaginyl-tRNA(Asn) + L-glutamate + ADP + phosphate + 2 H(+). In terms of biological role, allows the formation of correctly charged Asn-tRNA(Asn) or Gln-tRNA(Gln) through the transamidation of misacylated Asp-tRNA(Asn) or Glu-tRNA(Gln) in organisms which lack either or both of asparaginyl-tRNA or glutaminyl-tRNA synthetases. The reaction takes place in the presence of glutamine and ATP through an activated phospho-Asp-tRNA(Asn) or phospho-Glu-tRNA(Gln). In Bordetella avium (strain 197N), this protein is Aspartyl/glutamyl-tRNA(Asn/Gln) amidotransferase subunit C.